The sequence spans 250 residues: Sulfate transporter CysZ (250 aa).

A run of 4 helical transmembrane segments spans residues 26 to 46, 71 to 91, 150 to 170, and 211 to 231; these read LFVL…IYLA, ILWP…FTML, LFIL…WLLF, and IVYL…AAVA.

It belongs to the CysZ family.

Its subcellular location is the cell inner membrane. In terms of biological role, high affinity, high specificity proton-dependent sulfate transporter, which mediates sulfate uptake. Provides the sulfur source for the cysteine synthesis pathway. In Pseudomonas fluorescens (strain Pf0-1), this protein is Sulfate transporter CysZ.